The sequence spans 185 residues: Translation initiation factor IF-3, chloroplastic (185 aa).

It belongs to the IF-3 family. In terms of assembly, monomer.

The protein resides in the plastid. Its subcellular location is the chloroplast. IF-3 binds to the 30S ribosomal subunit and shifts the equilibrium between 70S ribosomes and their 50S and 30S subunits in favor of the free subunits, thus enhancing the availability of 30S subunits on which protein synthesis initiation begins. The protein is Translation initiation factor IF-3, chloroplastic of Cyanidium caldarium (Red alga).